Consider the following 527-residue polypeptide: RUS family member 1 (527 aa).

A glycan (N-linked (GlcNAc...) asparagine) is linked at asparagine 21. Residues serine 220–isoleucine 240 form a helical membrane-spanning segment. Residue asparagine 243 is glycosylated (N-linked (GlcNAc...) asparagine). Residues serine 245 to tyrosine 265 traverse the membrane as a helical segment. The N-linked (GlcNAc...) asparagine glycan is linked to asparagine 346. The disordered stretch occupies residues threonine 350–lysine 426. Residues asparagine 467 and asparagine 497 are each glycosylated (N-linked (GlcNAc...) asparagine).

The protein belongs to the RUS1 family.

The protein resides in the membrane. The protein is RUS family member 1 (rusf1) of Dictyostelium discoideum (Social amoeba).